Consider the following 311-residue polypeptide: Beta-ketoacyl-[acyl-carrier-protein] synthase III (311 aa).

Catalysis depends on residues Cys-114 and His-238. The tract at residues 239 to 243 (QANIR) is ACP-binding. Asn-268 is a catalytic residue.

The protein belongs to the thiolase-like superfamily. FabH family. Homodimer.

The protein resides in the cytoplasm. It carries out the reaction malonyl-[ACP] + acetyl-CoA + H(+) = 3-oxobutanoyl-[ACP] + CO2 + CoA. It functions in the pathway lipid metabolism; fatty acid biosynthesis. Functionally, catalyzes the condensation reaction of fatty acid synthesis by the addition to an acyl acceptor of two carbons from malonyl-ACP. Catalyzes the first condensation reaction which initiates fatty acid synthesis and may therefore play a role in governing the total rate of fatty acid production. Possesses both acetoacetyl-ACP synthase and acetyl transacylase activities. Its substrate specificity determines the biosynthesis of branched-chain and/or straight-chain of fatty acids. This Neorickettsia sennetsu (strain ATCC VR-367 / Miyayama) (Ehrlichia sennetsu) protein is Beta-ketoacyl-[acyl-carrier-protein] synthase III.